Reading from the N-terminus, the 276-residue chain is Large ribosomal subunit protein uL2 (276 aa).

A compositionally biased stretch (basic and acidic residues) spans 28-38; the sequence is RPEKSLTEKLS. Disordered regions lie at residues 28–57 and 219–276; these read RPEK…QGGG and TVRG…RRKK.

Belongs to the universal ribosomal protein uL2 family. Part of the 50S ribosomal subunit. Forms a bridge to the 30S subunit in the 70S ribosome.

Functionally, one of the primary rRNA binding proteins. Required for association of the 30S and 50S subunits to form the 70S ribosome, for tRNA binding and peptide bond formation. It has been suggested to have peptidyltransferase activity; this is somewhat controversial. Makes several contacts with the 16S rRNA in the 70S ribosome. The sequence is that of Large ribosomal subunit protein uL2 from Exiguobacterium sp. (strain ATCC BAA-1283 / AT1b).